The chain runs to 257 residues: Distal membrane-arm assembly complex protein 2 (257 aa).

S253 is modified (phosphoserine).

The protein belongs to the ATP synthase subunit s family. As to quaternary structure, interacts with incompletely assembled mitochondrial NADH:ubiquinone oxidoreductase complex (complex I).

Its subcellular location is the mitochondrion. Its function is as follows. Required for the assembly of the mitochondrial NADH:ubiquinone oxidoreductase complex (complex I). Involved in the assembly of the distal region of complex I. The protein is Distal membrane-arm assembly complex protein 2 of Homo sapiens (Human).